The chain runs to 301 residues: Eukaryotic translation initiation factor 3 subunit F (301 aa).

The MPN domain occupies V32–G169.

This sequence belongs to the eIF-3 subunit F family. In terms of assembly, component of the eukaryotic translation initiation factor 3 (eIF-3) complex.

The protein localises to the cytoplasm. Functionally, component of the eukaryotic translation initiation factor 3 (eIF-3) complex, which is involved in protein synthesis of a specialized repertoire of mRNAs and, together with other initiation factors, stimulates binding of mRNA and methionyl-tRNAi to the 40S ribosome. The eIF-3 complex specifically targets and initiates translation of a subset of mRNAs involved in cell proliferation. The chain is Eukaryotic translation initiation factor 3 subunit F from Mycosarcoma maydis (Corn smut fungus).